Consider the following 648-residue polypeptide: MRIAKILLPVSKLFPLDYLITEDLELNIGDLVVVHFRNKELTGIVWELDTNSEAKKIKTIEAKAPLNLSITLEVLELIKWMSSYYMSELGSIAKLVLPINISEKPIKIKEQQVKNHFVLPKLSEEQKQAVTILNESNKPTLIKGVTGSGKTEIYFHIIADYLIKGRQVLIMLPEIALGKQIINRFIDRFGFEPIIWNSSVTKAQKKMILRGILSNKVKVVIGTRSSLFLPFHNLGLIVIDEEHDDSYKQDDNILYNARDTAIVRGKFDKAKIVLCSATPSLETIYNIKTHKYQLVTLANRYKNVDLPNIEIIDMTKEKLPKNSYLSKILIDAIKGNLENKKQALLFLNRRGYAPLMLCKACGHRFTCKFCSAWMVLHKATKKLECHHCGYQSKIFSSCPECLEDETLTICGPGIERIAEEAMLLFPKSKIAVISKDHAKTPEKIAQLLHQMENLEIDILIGTQIITKGYHFPNLTLVGVIDADLGSNNAELRASERTFQLLHQVGGRAGRGDSKGVVYLQSYYPDNIIFSYVKVGDEDRFFTNELEIRKAANMPPFSKTASLILSGFSESKILDIARKIVQIAPKANVKILGPARSLMSKLAGKYRYRILIIADKKFNLQKYLKFWLGFIKIPSYCQIKIDIDPKTFY.

The 167-residue stretch at 131–297 folds into the Helicase ATP-binding domain; sequence TILNESNKPT…KTHKYQLVTL (167 aa). 144–151 is an ATP binding site; sequence GVTGSGKT. The DEAH box signature appears at 240–243; the sequence is DEEH. Residues cysteine 358, cysteine 361, cysteine 367, cysteine 370, cysteine 385, cysteine 388, cysteine 398, and cysteine 401 each coordinate Zn(2+). Positions 375 to 548 constitute a Helicase C-terminal domain; it reads VLHKATKKLE…RFFTNELEIR (174 aa).

Belongs to the helicase family. PriA subfamily. Component of the replication restart primosome. Zn(2+) is required as a cofactor.

It catalyses the reaction Couples ATP hydrolysis with the unwinding of duplex DNA by translocating in the 3'-5' direction.. It carries out the reaction ATP + H2O = ADP + phosphate + H(+). Functionally, initiates the restart of stalled replication forks, which reloads the replicative helicase on sites other than the origin of replication. Recognizes and binds to abandoned replication forks and remodels them to uncover a helicase loading site. Promotes assembly of the primosome at these replication forks. This is Replication restart protein PriA from Rickettsia prowazekii (strain Madrid E).